The sequence spans 320 residues: Annexin A5 (320 aa).

Ala2 is subject to N-acetylalanine. 4 Annexin repeats span residues 15–86, 87–158, 170–242, and 246–317; these read FDER…ALMK, PSRL…VLLQ, AQVE…AVVK, and SIPA…LLCG. Lys29 is covalently cross-linked (Glycyl lysine isopeptide (Lys-Gly) (interchain with G-Cter in SUMO1); alternate). A Glycyl lysine isopeptide (Lys-Gly) (interchain with G-Cter in SUMO2); alternate cross-link involves residue Lys29. Phosphoserine is present on Ser37. Lys70, Lys76, Lys79, Lys97, and Lys101 each carry N6-acetyllysine. Lys290 is modified (N6-succinyllysine). Positions 314–320 match the [IL]-x-C-x-x-[DE] motif motif; that stretch reads LLCGGED.

It belongs to the annexin family. As to quaternary structure, monomer. Binds ATRX and EIF5B. In terms of processing, S-nitrosylation is induced by interferon-gamma and oxidatively-modified low-densitity lipoprotein (LDL(ox)) possibly implicating the iNOS-S100A8/9 transnitrosylase complex.

In terms of biological role, this protein is an anticoagulant protein that acts as an indirect inhibitor of the thromboplastin-specific complex, which is involved in the blood coagulation cascade. The polypeptide is Annexin A5 (ANXA5) (Macaca fascicularis (Crab-eating macaque)).